The primary structure comprises 643 residues: Threonine--tRNA ligase (643 aa).

Positions 1 to 61 constitute a TGS domain; sequence MVAISLPDGS…TTDASVSLIT (61 aa). The catalytic stretch occupies residues 243 to 534; sequence DHRRVGQEMD…LIENCAGRFP (292 aa). Positions 334, 385, and 511 each coordinate Zn(2+).

The protein belongs to the class-II aminoacyl-tRNA synthetase family. In terms of assembly, homodimer. Requires Zn(2+) as cofactor.

Its subcellular location is the cytoplasm. It carries out the reaction tRNA(Thr) + L-threonine + ATP = L-threonyl-tRNA(Thr) + AMP + diphosphate + H(+). Its function is as follows. Catalyzes the attachment of threonine to tRNA(Thr) in a two-step reaction: L-threonine is first activated by ATP to form Thr-AMP and then transferred to the acceptor end of tRNA(Thr). Also edits incorrectly charged L-seryl-tRNA(Thr). This Rhodospirillum rubrum (strain ATCC 11170 / ATH 1.1.1 / DSM 467 / LMG 4362 / NCIMB 8255 / S1) protein is Threonine--tRNA ligase.